A 940-amino-acid polypeptide reads, in one-letter code: Translation initiation factor IF-2 (940 aa).

Disordered regions lie at residues 116-137 (PEQE…SSDT), 151-196 (EVEA…EQRS), 210-294 (AVRK…VKKV), and 318-346 (HSAP…VANR). The span at 121–137 (LESTSVAEIPESVSSDT) shows a compositional bias: polar residues. A compositionally biased stretch (acidic residues) spans 159–180 (PEPEVEATPEPEVEDVVAEEAE). Residues 181 to 193 (PAAAEPAPAPVVE) are compositionally biased toward low complexity. Residues 213-239 (KKAEEEAEVARRKADAEKAEAAAKQKA) are compositionally biased toward basic and acidic residues. The segment covering 282–294 (KHNKKAGKAVKKV) has biased composition (basic residues). Positions 326 to 337 (GGQNNNSSNSGS) are enriched in low complexity. Residues 441-610 (ARAPVVTVMG…ALQAELLELS (170 aa)) enclose the tr-type G domain. The interval 450-457 (GHVDHGKT) is G1. 450-457 (GHVDHGKT) serves as a coordination point for GTP. A G2 region spans residues 475-479 (GITQH). The interval 496–499 (DTPG) is G3. GTP contacts are provided by residues 496–500 (DTPGH) and 550–553 (NKID). The segment at 550–553 (NKID) is G4. The tract at residues 586-588 (SAQ) is G5.

It belongs to the TRAFAC class translation factor GTPase superfamily. Classic translation factor GTPase family. IF-2 subfamily.

It localises to the cytoplasm. Its function is as follows. One of the essential components for the initiation of protein synthesis. Protects formylmethionyl-tRNA from spontaneous hydrolysis and promotes its binding to the 30S ribosomal subunits. Also involved in the hydrolysis of GTP during the formation of the 70S ribosomal complex. The polypeptide is Translation initiation factor IF-2 (Teredinibacter turnerae (strain ATCC 39867 / T7901)).